A 2603-amino-acid polypeptide reads, in one-letter code: Protein SABRE (2603 aa).

Positions 1–35 are cleaved as a signal peptide; the sequence is MAASPAKFFFGFLIVSIVLWMIFMLFAWMLSRVLG. Residue asparagine 196 is glycosylated (N-linked (GlcNAc...) asparagine). The disordered stretch occupies residues 259–287; sequence FPKSKQSSASLRSDEVRTSATAASSAKKP. Residues asparagine 331, asparagine 486, asparagine 597, asparagine 807, asparagine 867, asparagine 887, asparagine 1154, asparagine 1249, asparagine 1280, and asparagine 1408 are each glycosylated (N-linked (GlcNAc...) asparagine). Positions 786–814 are disordered; that stretch reads PESGCNKGISSVKDGGPSEKINQSNSVNK. Residues 1416–1436 are disordered; sequence FHQSPSSTEHPTDVGTVYSSQ. Residues asparagine 1492 and asparagine 1659 are each glycosylated (N-linked (GlcNAc...) asparagine). 2 disordered regions span residues 1656-1676 and 1717-1777; these read EFEN…DDDG and EPPK…DDIG. The span at 1731–1748 shows a compositional bias: basic and acidic residues; that stretch reads KIHEENQKESCPETHQGE. Residues 1749 to 1766 show a composition bias toward polar residues; the sequence is MSRSSASPGRNLPSSPSH. Residues 1995 to 2023 are a coiled coil; it reads VEEVELAKINLEEKERERKLLLDDIRKLS. Asparagine 2333 carries an N-linked (GlcNAc...) asparagine glycan. 3 disordered regions span residues 2339–2380, 2448–2479, and 2554–2603; these read EQQE…RPRK, GKKF…KPDQ, and IRRH…DFRE. The span at 2343–2380 shows a compositional bias: basic and acidic residues; the sequence is DFSKQKVKEIKPVKSGRSSHEEKKAGKSHEEKKSRPRK. Asparagine 2467 is a glycosylation site (N-linked (GlcNAc...) asparagine). Positions 2554-2565 are enriched in basic residues; it reads IRRHTKKFRPRS. The span at 2566 to 2583 shows a compositional bias: polar residues; sequence QRGSTSQQRESLPSSPIE. A compositionally biased stretch (low complexity) spans 2586–2603; it reads PFESGYSSGSSPYEDFRE.

This sequence belongs to the SABRE family. As to expression, highest levels in leaves, also expressed in leaves, flowers, and siliques, and, to a lower extent, in roots and stems.

The protein resides in the secreted. The protein localises to the golgi apparatus. Its function is as follows. May be involved in membrane trafficking. Required for cell expansion, especially in root cortex, probably by counteracting the action of ethylene in promoting cells radial expansion. Involved in female organ development. Antagonistically interacts with ethylene signaling to regulate plant responses to Pi starvation. The sequence is that of Protein SABRE from Arabidopsis thaliana (Mouse-ear cress).